The chain runs to 957 residues: Glycine dehydrogenase (decarboxylating) (957 aa).

An N6-(pyridoxal phosphate)lysine modification is found at K708.

Belongs to the GcvP family. The glycine cleavage system is composed of four proteins: P, T, L and H. Requires pyridoxal 5'-phosphate as cofactor.

It carries out the reaction N(6)-[(R)-lipoyl]-L-lysyl-[glycine-cleavage complex H protein] + glycine + H(+) = N(6)-[(R)-S(8)-aminomethyldihydrolipoyl]-L-lysyl-[glycine-cleavage complex H protein] + CO2. The glycine cleavage system catalyzes the degradation of glycine. The P protein binds the alpha-amino group of glycine through its pyridoxal phosphate cofactor; CO(2) is released and the remaining methylamine moiety is then transferred to the lipoamide cofactor of the H protein. This Escherichia coli (strain UTI89 / UPEC) protein is Glycine dehydrogenase (decarboxylating).